Consider the following 415-residue polypeptide: MASIGPATTTAVKLRSSIFNPQSSTLSPSQQCITFTKSLHSFPTATRHNVASGVRCMAAVGEAATETKARTRSKYEIETLTGWLLKQEMAGVIDAELTIVLSSISLACKQIASLVQRAGISNLTGIQGAVNIQGEDQKKLDVVSNEVFSSCLRSSGRTGIIASEEEDVPVAVEESYSGNYIVVFDPLDGSSNIDAAVSTGSIFGIYSPNDECIVDSDHDDESQLSAEEQRCVVNVCQPGDNLLAAGYCMYSSSVIFVLTIGKGVYAFTLDPMYGEFVLTSEKIQIPKAGKIYSFNEGNYKMWDDKLKKYMDDLKEPGESQKPYSSRYIGSLVGDFHRTLLYGGIYGYPRDAKSKNGKLRLLYECAPMSFIVEQAGGKGSDGHQRILDIQPTEIHQRVPLYIGSVEEVEKLEKYLA.

A chloroplast-targeting transit peptide spans 1-57 (MASIGPATTTAVKLRSSIFNPQSSTLSPSQQCITFTKSLHSFPTATRHNVASGVRCM). Positions 135, 164, 185, 187, and 188 each coordinate Mg(2+). 188-191 (DGSS) is a substrate binding site. The interval 207 to 232 (SPNDECIVDSDHDDESQLSAEEQRCV) is involved in light regulation. Cys-231 and Cys-236 are disulfide-bonded. Substrate-binding residues include Asn-295, Tyr-327, Tyr-345, Tyr-347, and Lys-357. A Mg(2+)-binding site is contributed by Glu-363.

This sequence belongs to the FBPase class 1 family. As to quaternary structure, homotetramer. The cofactor is Mg(2+).

The protein resides in the plastid. It is found in the chloroplast. It catalyses the reaction beta-D-fructose 1,6-bisphosphate + H2O = beta-D-fructose 6-phosphate + phosphate. It functions in the pathway carbohydrate biosynthesis; Calvin cycle. In Spinacia oleracea (Spinach), this protein is Fructose-1,6-bisphosphatase, chloroplastic.